The primary structure comprises 76 residues: Conotoxin VnMEKL-012 (76 aa).

The signal sequence occupies residues 1–18 (MKLTILFLVAAVLMSTQA). Residues 19–42 (LIQHDGEKSQKAKMKFLTARTLSA) constitute a propeptide that is removed on maturation. Cystine bridges form between cysteine 49-cysteine 65, cysteine 56-cysteine 70, and cysteine 64-cysteine 74.

Belongs to the conotoxin O2 superfamily. In terms of tissue distribution, expressed by the venom duct.

It is found in the secreted. This Conus ventricosus (Mediterranean cone) protein is Conotoxin VnMEKL-012.